Reading from the N-terminus, the 173-residue chain is MILSGKQIKDSLGKDIVIEPFNEKQINPNSYNLKLHNELLVYDEEVLDMKKPNKTKKLIIPEEGIVLEPRKLYLGRTLEYTETDKYVPMLEGRSSIGRLGVFIHVTAGFGDVGFKGYWTLEIFCVEPIRIYSGVEICQIYYHDVGGDYEKYSSGKYQNNKGIQPSLLYKDFIN.

Residues arginine 93–arginine 98, aspartate 111, threonine 119–glutamate 121, glutamine 138, and tyrosine 151 contribute to the dCTP site. The Proton donor/acceptor role is filled by glutamate 121.

Belongs to the dCTP deaminase family. In terms of assembly, homotrimer.

It catalyses the reaction dCTP + 2 H2O = dUMP + NH4(+) + diphosphate. It participates in pyrimidine metabolism; dUMP biosynthesis; dUMP from dCTP: step 1/1. In terms of biological role, bifunctional enzyme that catalyzes both the deamination of dCTP to dUTP and the hydrolysis of dUTP to dUMP without releasing the toxic dUTP intermediate. The chain is dCTP deaminase, dUMP-forming from Clostridium acetobutylicum (strain ATCC 824 / DSM 792 / JCM 1419 / IAM 19013 / LMG 5710 / NBRC 13948 / NRRL B-527 / VKM B-1787 / 2291 / W).